The sequence spans 350 residues: Biotin synthase (350 aa).

The Radical SAM core domain occupies 38–256; that stretch reads NYVQVSTLLS…IAIARIMMPQ (219 aa). [4Fe-4S] cluster is bound by residues cysteine 53, cysteine 57, and cysteine 60. [2Fe-2S] cluster is bound by residues cysteine 97, cysteine 128, cysteine 188, and arginine 260.

This sequence belongs to the radical SAM superfamily. Biotin synthase family. As to quaternary structure, homodimer. Requires [4Fe-4S] cluster as cofactor. It depends on [2Fe-2S] cluster as a cofactor.

It catalyses the reaction (4R,5S)-dethiobiotin + (sulfur carrier)-SH + 2 reduced [2Fe-2S]-[ferredoxin] + 2 S-adenosyl-L-methionine = (sulfur carrier)-H + biotin + 2 5'-deoxyadenosine + 2 L-methionine + 2 oxidized [2Fe-2S]-[ferredoxin]. It participates in cofactor biosynthesis; biotin biosynthesis; biotin from 7,8-diaminononanoate: step 2/2. Catalyzes the conversion of dethiobiotin (DTB) to biotin by the insertion of a sulfur atom into dethiobiotin via a radical-based mechanism. This is Biotin synthase from Vibrio campbellii (strain ATCC BAA-1116).